Consider the following 220-residue polypeptide: Small ribosomal subunit protein uS5 (220 aa).

The disordered stretch occupies residues 1–39 (MAEQPAGQAGTTDNRDARGDREGRRRDSGRGSRERDGEK). Positions 13-39 (DNRDARGDREGRRRDSGRGSRERDGEK) are enriched in basic and acidic residues. One can recognise an S5 DRBM domain in the interval 42–105 (YLERVVAINR…EEARKSFFRV (64 aa)).

It belongs to the universal ribosomal protein uS5 family. In terms of assembly, part of the 30S ribosomal subunit. Contacts proteins S4 and S8.

With S4 and S12 plays an important role in translational accuracy. In terms of biological role, located at the back of the 30S subunit body where it stabilizes the conformation of the head with respect to the body. This is Small ribosomal subunit protein uS5 from Mycobacterium bovis (strain ATCC BAA-935 / AF2122/97).